We begin with the raw amino-acid sequence, 407 residues long: Probable sodium/metabolite cotransporter BASS5, chloroplastic (407 aa).

Residues 1-57 constitute a chloroplast transit peptide; sequence MGVISPTETLFLKSQHRLLQPRNYSYALAFHSTRRVANFPRNSFSSLGSCSVDFPLR. The next 9 membrane-spanning stretches (helical) occupy residues 101 to 121, 122 to 142, 162 to 184, 191 to 213, 222 to 242, 252 to 272, 286 to 306, 317 to 337, and 379 to 399; these read FIPH…PSFT, WFKP…VGIN, YIGQ…VSLF, GAGI…TFLT, IVMT…LSLL, VFGM…AGLL, PFLP…PLAL, ATIL…GYFF, and LVGV…VSLV.

It belongs to the bile acid:sodium symporter (BASS) (TC 2.A.28) family. In terms of tissue distribution, widely expressed.

It localises to the membrane. The protein localises to the plastid. It is found in the chloroplast envelope. Its function is as follows. Plastidic transporter involved in the biosynthesis of aliphatic glucosinolates by translocating the biosynthetic intermediates of Met-derived glucosinolates across chloroplast membranes. Transports short chain (C2) alpha-keto acids, such as 4-methylsulfanyl-2-oxobutanoic acid, from the cytosol to the chloroplast where they are subjected to chain elongation cycles. Also functions in the transport of chain-elongated (C3 to C8) Met derivatives from the chloroplast to the cytosol. Does not seem to be involved in the transport of indole-derived glucosinolates. In Arabidopsis thaliana (Mouse-ear cress), this protein is Probable sodium/metabolite cotransporter BASS5, chloroplastic (BASS5).